We begin with the raw amino-acid sequence, 374 residues long: Tuliposide A-converting enzyme b1, amyloplastic (374 aa).

The N-terminal 68 residues, 1–68 (MSVALFCGPP…TNSSLSPSPT (68 aa)), are a transit peptide targeting the amyloplast. Residue Ser-226 is the Acyl-ester intermediate of the active site. Residues Asp-316 and His-348 each act as charge relay system in the active site.

It belongs to the AB hydrolase superfamily. As to quaternary structure, homodimer. As to expression, highly expressed in pistil and bulb scales. Lower expression in stem, and barely detected in root, leaf, petal and stamen.

It localises to the plastid. The protein resides in the amyloplast. The catalysed reaction is 6-tuliposide A = tulipalin A + D-glucose. In terms of biological role, lactone-forming carboxylesterases, specifically catalyzing intramolecular transesterification, but not hydrolysis. Involved in the biosynthesis of tulipalins, defensive chemicals that show antimicrobial activities against a broad range of strains of bacteria and fungi. Substrates are 6-tuliposide A &gt; 6-tuliposide B. The polypeptide is Tuliposide A-converting enzyme b1, amyloplastic (TCEA-B1) (Tulipa gesneriana (Garden tulip)).